The chain runs to 202 residues: NADH-quinone oxidoreductase subunit C (202 aa).

It belongs to the complex I 30 kDa subunit family. NDH-1 is composed of 14 different subunits. Subunits NuoB, C, D, E, F, and G constitute the peripheral sector of the complex.

Its subcellular location is the cell inner membrane. It catalyses the reaction a quinone + NADH + 5 H(+)(in) = a quinol + NAD(+) + 4 H(+)(out). Functionally, NDH-1 shuttles electrons from NADH, via FMN and iron-sulfur (Fe-S) centers, to quinones in the respiratory chain. The immediate electron acceptor for the enzyme in this species is believed to be ubiquinone. Couples the redox reaction to proton translocation (for every two electrons transferred, four hydrogen ions are translocated across the cytoplasmic membrane), and thus conserves the redox energy in a proton gradient. In Bartonella quintana (strain Toulouse) (Rochalimaea quintana), this protein is NADH-quinone oxidoreductase subunit C.